Consider the following 100-residue polypeptide: Putative membrane protein insertion efficiency factor (100 aa).

The interval 73-100 (DPVPDLPGSAPEENGRPSPDGQHSGSGG) is disordered.

Belongs to the UPF0161 family.

The protein resides in the cell inner membrane. In terms of biological role, could be involved in insertion of integral membrane proteins into the membrane. The protein is Putative membrane protein insertion efficiency factor of Synechococcus sp. (strain JA-3-3Ab) (Cyanobacteria bacterium Yellowstone A-Prime).